Here is a 249-residue protein sequence, read N- to C-terminus: Small ribosomal subunit protein uS3y (249 aa).

Residues 21–92 enclose the KH type-2 domain; it reads LNEVLTRELA…SVELYAEKVN (72 aa). Ser-212 carries the post-translational modification Phosphoserine.

This sequence belongs to the universal ribosomal protein uS3 family.

This Arabidopsis thaliana (Mouse-ear cress) protein is Small ribosomal subunit protein uS3y (RPS3B).